The following is a 292-amino-acid chain: NAD-dependent protein deacetylase sir-2.4 (292 aa).

The Deacetylase sirtuin-type domain occupies Ile-31 to Ser-292. NAD(+)-binding positions include Gly-56–Trp-75 and Gln-116–Asp-119. The active-site Proton acceptor is His-136. Cys-144, Cys-147, Cys-163, and Cys-169 together coordinate Zn(2+). NAD(+) is bound by residues Gly-216–Ser-218, Asn-242–Gln-244, and Val-260.

It belongs to the sirtuin family. Class IV subfamily. Requires Zn(2+) as cofactor.

The catalysed reaction is N(6)-acetyl-L-lysyl-[protein] + NAD(+) + H2O = 2''-O-acetyl-ADP-D-ribose + nicotinamide + L-lysyl-[protein]. Its function is as follows. NAD-dependent protein deacetylase. This is NAD-dependent protein deacetylase sir-2.4 (sir-2.4) from Caenorhabditis elegans.